We begin with the raw amino-acid sequence, 194 residues long: Protein GrpE (194 aa).

Over residues 1 to 14 (MENTQENPTSQNPT) the composition is skewed to polar residues. A disordered region spans residues 1-50 (MENTQENPTSQNPTPADETARQAAEAAAPQQEAAANAATDSPVNAEQSAL). The span at 21–38 (RQAAEAAAPQQEAAANAA) shows a compositional bias: low complexity.

It belongs to the GrpE family. Homodimer.

Its subcellular location is the cytoplasm. Its function is as follows. Participates actively in the response to hyperosmotic and heat shock by preventing the aggregation of stress-denatured proteins, in association with DnaK and GrpE. It is the nucleotide exchange factor for DnaK and may function as a thermosensor. Unfolded proteins bind initially to DnaJ; upon interaction with the DnaJ-bound protein, DnaK hydrolyzes its bound ATP, resulting in the formation of a stable complex. GrpE releases ADP from DnaK; ATP binding to DnaK triggers the release of the substrate protein, thus completing the reaction cycle. Several rounds of ATP-dependent interactions between DnaJ, DnaK and GrpE are required for fully efficient folding. The protein is Protein GrpE of Paraburkholderia phytofirmans (strain DSM 17436 / LMG 22146 / PsJN) (Burkholderia phytofirmans).